A 175-amino-acid chain; its full sequence is Adenine phosphoribosyltransferase (175 aa).

The protein belongs to the purine/pyrimidine phosphoribosyltransferase family. In terms of assembly, homodimer.

It is found in the cytoplasm. The enzyme catalyses AMP + diphosphate = 5-phospho-alpha-D-ribose 1-diphosphate + adenine. It participates in purine metabolism; AMP biosynthesis via salvage pathway; AMP from adenine: step 1/1. In terms of biological role, catalyzes a salvage reaction resulting in the formation of AMP, that is energically less costly than de novo synthesis. The chain is Adenine phosphoribosyltransferase from Synechococcus sp. (strain JA-3-3Ab) (Cyanobacteria bacterium Yellowstone A-Prime).